Reading from the N-terminus, the 510-residue chain is Bifunctional purine biosynthesis protein PurH (510 aa).

The region spanning M1–C142 is the MGS-like domain.

This sequence belongs to the PurH family.

The enzyme catalyses (6R)-10-formyltetrahydrofolate + 5-amino-1-(5-phospho-beta-D-ribosyl)imidazole-4-carboxamide = 5-formamido-1-(5-phospho-D-ribosyl)imidazole-4-carboxamide + (6S)-5,6,7,8-tetrahydrofolate. It catalyses the reaction IMP + H2O = 5-formamido-1-(5-phospho-D-ribosyl)imidazole-4-carboxamide. It participates in purine metabolism; IMP biosynthesis via de novo pathway; 5-formamido-1-(5-phospho-D-ribosyl)imidazole-4-carboxamide from 5-amino-1-(5-phospho-D-ribosyl)imidazole-4-carboxamide (10-formyl THF route): step 1/1. Its pathway is purine metabolism; IMP biosynthesis via de novo pathway; IMP from 5-formamido-1-(5-phospho-D-ribosyl)imidazole-4-carboxamide: step 1/1. The chain is Bifunctional purine biosynthesis protein PurH from Campylobacter jejuni (strain RM1221).